The chain runs to 212 residues: Inactive ribonuclease-like protein 10 (212 aa).

Residues 1–24 (MKVTLVHLLFMMLLLLLGLGVGLG) form the signal peptide. N-linked (GlcNAc...) asparagine glycans are attached at residues Asn-129 and Asn-204.

Belongs to the pancreatic ribonuclease family. In terms of processing, the N-terminus is blocked. Glycosylated. Male-specific expression in proximal caput of the epididymis.

It localises to the secreted. In terms of biological role, secreted proximal epididymal protein required for post-testicular sperm maturation and male fertility. May be involved in sperm adhesion to the egg zona pellucida. Does not have ribonuclease activity. The chain is Inactive ribonuclease-like protein 10 (Rnase10) from Rattus norvegicus (Rat).